The following is a 248-amino-acid chain: 1-(5-phosphoribosyl)-5-[(5-phosphoribosylamino)methylideneamino] imidazole-4-carboxamide isomerase (248 aa).

The active-site Proton acceptor is the Asp-8. Asp-129 functions as the Proton donor in the catalytic mechanism.

This sequence belongs to the HisA/HisF family.

The protein resides in the cytoplasm. The catalysed reaction is 1-(5-phospho-beta-D-ribosyl)-5-[(5-phospho-beta-D-ribosylamino)methylideneamino]imidazole-4-carboxamide = 5-[(5-phospho-1-deoxy-D-ribulos-1-ylimino)methylamino]-1-(5-phospho-beta-D-ribosyl)imidazole-4-carboxamide. It functions in the pathway amino-acid biosynthesis; L-histidine biosynthesis; L-histidine from 5-phospho-alpha-D-ribose 1-diphosphate: step 4/9. This chain is 1-(5-phosphoribosyl)-5-[(5-phosphoribosylamino)methylideneamino] imidazole-4-carboxamide isomerase, found in Desulfitobacterium hafniense (strain Y51).